The chain runs to 442 residues: ORC1-type DNA replication protein 8 (442 aa).

ATP-binding positions include 66–70 (VGKTA) and Tyr-218.

This sequence belongs to the CDC6/cdc18 family.

Its function is as follows. Involved in regulation of DNA replication. In Haloarcula marismortui (strain ATCC 43049 / DSM 3752 / JCM 8966 / VKM B-1809) (Halobacterium marismortui), this protein is ORC1-type DNA replication protein 8 (cdc6h).